Here is a 247-residue protein sequence, read N- to C-terminus: Pyridoxine 5'-phosphate synthase (247 aa).

Residue Asn-12 coordinates 3-amino-2-oxopropyl phosphate. Asp-14–His-15 serves as a coordination point for 1-deoxy-D-xylulose 5-phosphate. Residue Arg-23 participates in 3-amino-2-oxopropyl phosphate binding. Residue His-48 is the Proton acceptor of the active site. 1-deoxy-D-xylulose 5-phosphate-binding residues include Arg-50 and His-55. Glu-75 functions as the Proton acceptor in the catalytic mechanism. Thr-105 is a 1-deoxy-D-xylulose 5-phosphate binding site. His-196 serves as the catalytic Proton donor. Residues Gly-197 and Gly-218–His-219 contribute to the 3-amino-2-oxopropyl phosphate site.

The protein belongs to the PNP synthase family. In terms of assembly, homooctamer; tetramer of dimers.

The protein resides in the cytoplasm. It catalyses the reaction 3-amino-2-oxopropyl phosphate + 1-deoxy-D-xylulose 5-phosphate = pyridoxine 5'-phosphate + phosphate + 2 H2O + H(+). The protein operates within cofactor biosynthesis; pyridoxine 5'-phosphate biosynthesis; pyridoxine 5'-phosphate from D-erythrose 4-phosphate: step 5/5. In terms of biological role, catalyzes the complicated ring closure reaction between the two acyclic compounds 1-deoxy-D-xylulose-5-phosphate (DXP) and 3-amino-2-oxopropyl phosphate (1-amino-acetone-3-phosphate or AAP) to form pyridoxine 5'-phosphate (PNP) and inorganic phosphate. The polypeptide is Pyridoxine 5'-phosphate synthase (Pseudomonas fluorescens (strain Pf0-1)).